Here is a 149-residue protein sequence, read N- to C-terminus: D-aminoacyl-tRNA deacylase (149 aa).

The Gly-cisPro motif, important for rejection of L-amino acids signature appears at 137 to 138 (GP).

It belongs to the DTD family. Homodimer.

Its subcellular location is the cytoplasm. It catalyses the reaction glycyl-tRNA(Ala) + H2O = tRNA(Ala) + glycine + H(+). The enzyme catalyses a D-aminoacyl-tRNA + H2O = a tRNA + a D-alpha-amino acid + H(+). An aminoacyl-tRNA editing enzyme that deacylates mischarged D-aminoacyl-tRNAs. Also deacylates mischarged glycyl-tRNA(Ala), protecting cells against glycine mischarging by AlaRS. Acts via tRNA-based rather than protein-based catalysis; rejects L-amino acids rather than detecting D-amino acids in the active site. By recycling D-aminoacyl-tRNA to D-amino acids and free tRNA molecules, this enzyme counteracts the toxicity associated with the formation of D-aminoacyl-tRNA entities in vivo and helps enforce protein L-homochirality. This Clostridium kluyveri (strain ATCC 8527 / DSM 555 / NBRC 12016 / NCIMB 10680 / K1) protein is D-aminoacyl-tRNA deacylase.